The primary structure comprises 198 residues: Superoxide dismutase [Fe] (198 aa).

Fe cation-binding residues include His-27, His-74, Asp-158, and His-162.

This sequence belongs to the iron/manganese superoxide dismutase family. Homodimer. It depends on Fe cation as a cofactor.

Its subcellular location is the cytoplasm. It carries out the reaction 2 superoxide + 2 H(+) = H2O2 + O2. Destroys superoxide anion radicals which are normally produced within the cells and which are toxic to biological systems. The polypeptide is Superoxide dismutase [Fe] (SODB) (Plasmodium falciparum (isolate HB3)).